Here is an 838-residue protein sequence, read N- to C-terminus: Alpha-glucan phosphorylase, H isozyme (838 aa).

The tract at residues 1 to 21 is disordered; it reads MEGGAKSNDVSAAPIAQPLSE. Position 684 is an N6-(pyridoxal phosphate)lysine (lysine 684).

This sequence belongs to the glycogen phosphorylase family. Pyridoxal 5'-phosphate is required as a cofactor.

It localises to the cytoplasm. The enzyme catalyses [(1-&gt;4)-alpha-D-glucosyl](n) + phosphate = [(1-&gt;4)-alpha-D-glucosyl](n-1) + alpha-D-glucose 1-phosphate. Its function is as follows. Phosphorylase is an important allosteric enzyme in carbohydrate metabolism. Enzymes from different sources differ in their regulatory mechanisms and in their natural substrates. However, all known phosphorylases share catalytic and structural properties. The chain is Alpha-glucan phosphorylase, H isozyme from Solanum tuberosum (Potato).